The sequence spans 207 residues: LexA repressor (207 aa).

The H-T-H motif DNA-binding region spans V28–S48. Catalysis depends on for autocatalytic cleavage activity residues S130 and K168.

This sequence belongs to the peptidase S24 family. In terms of assembly, homodimer.

The enzyme catalyses Hydrolysis of Ala-|-Gly bond in repressor LexA.. In terms of biological role, represses a number of genes involved in the response to DNA damage (SOS response), including recA and lexA. In the presence of single-stranded DNA, RecA interacts with LexA causing an autocatalytic cleavage which disrupts the DNA-binding part of LexA, leading to derepression of the SOS regulon and eventually DNA repair. The polypeptide is LexA repressor (Staphylococcus haemolyticus (strain JCSC1435)).